Consider the following 301-residue polypeptide: 4-hydroxy-tetrahydrodipicolinate synthase (301 aa).

Position 46 (Thr46) interacts with pyruvate. Catalysis depends on Tyr135, which acts as the Proton donor/acceptor. Lys163 serves as the catalytic Schiff-base intermediate with substrate. A pyruvate-binding site is contributed by Ile205.

Belongs to the DapA family. In terms of assembly, homotetramer; dimer of dimers.

It localises to the cytoplasm. The catalysed reaction is L-aspartate 4-semialdehyde + pyruvate = (2S,4S)-4-hydroxy-2,3,4,5-tetrahydrodipicolinate + H2O + H(+). It participates in amino-acid biosynthesis; L-lysine biosynthesis via DAP pathway; (S)-tetrahydrodipicolinate from L-aspartate: step 3/4. Functionally, catalyzes the condensation of (S)-aspartate-beta-semialdehyde [(S)-ASA] and pyruvate to 4-hydroxy-tetrahydrodipicolinate (HTPA). This chain is 4-hydroxy-tetrahydrodipicolinate synthase, found in Lacticaseibacillus casei (strain BL23) (Lactobacillus casei).